Here is a 556-residue protein sequence, read N- to C-terminus: 2-succinyl-5-enolpyruvyl-6-hydroxy-3-cyclohexene-1-carboxylate synthase (556 aa).

Belongs to the TPP enzyme family. MenD subfamily. In terms of assembly, homodimer. Requires Mg(2+) as cofactor. It depends on Mn(2+) as a cofactor. Thiamine diphosphate is required as a cofactor.

It catalyses the reaction isochorismate + 2-oxoglutarate + H(+) = 5-enolpyruvoyl-6-hydroxy-2-succinyl-cyclohex-3-ene-1-carboxylate + CO2. The protein operates within quinol/quinone metabolism; 1,4-dihydroxy-2-naphthoate biosynthesis; 1,4-dihydroxy-2-naphthoate from chorismate: step 2/7. It functions in the pathway quinol/quinone metabolism; menaquinone biosynthesis. Functionally, catalyzes the thiamine diphosphate-dependent decarboxylation of 2-oxoglutarate and the subsequent addition of the resulting succinic semialdehyde-thiamine pyrophosphate anion to isochorismate to yield 2-succinyl-5-enolpyruvyl-6-hydroxy-3-cyclohexene-1-carboxylate (SEPHCHC). The polypeptide is 2-succinyl-5-enolpyruvyl-6-hydroxy-3-cyclohexene-1-carboxylate synthase (Enterobacter sp. (strain 638)).